We begin with the raw amino-acid sequence, 254 residues long: 4-hydroxy-tetrahydrodipicolinate reductase (254 aa).

Residues 8–13, 87–89, and 111–114 each bind NAD(+); these read GGSGRV, GTT, and ATNM. The Proton donor/acceptor role is filled by H143. H144 provides a ligand contact to (S)-2,3,4,5-tetrahydrodipicolinate. Residue K147 is the Proton donor of the active site. 153–154 is a (S)-2,3,4,5-tetrahydrodipicolinate binding site; it reads GT.

Belongs to the DapB family.

The protein resides in the cytoplasm. The enzyme catalyses (S)-2,3,4,5-tetrahydrodipicolinate + NAD(+) + H2O = (2S,4S)-4-hydroxy-2,3,4,5-tetrahydrodipicolinate + NADH + H(+). The catalysed reaction is (S)-2,3,4,5-tetrahydrodipicolinate + NADP(+) + H2O = (2S,4S)-4-hydroxy-2,3,4,5-tetrahydrodipicolinate + NADPH + H(+). It functions in the pathway amino-acid biosynthesis; L-lysine biosynthesis via DAP pathway; (S)-tetrahydrodipicolinate from L-aspartate: step 4/4. Catalyzes the conversion of 4-hydroxy-tetrahydrodipicolinate (HTPA) to tetrahydrodipicolinate. The protein is 4-hydroxy-tetrahydrodipicolinate reductase of Nitratiruptor sp. (strain SB155-2).